Reading from the N-terminus, the 328-residue chain is MSSSRNTHWCHRCQRAVRLHGQEPVCFYCGGGFVEELDMAQASPFDMFRSHRGVVERDQTFDLMDAFSVFMRNRLAERSHDREIRGRTISSGPENFPGLAPLLIFGGQVPYRLTGDNAVEALFNGGSPGIGITRGNTGDYFFGPGLEELFEQLSAGTTRRGPPPAPRSAIDALPTIKIAQRHLRSSDSNCPVCKDEFELGSEAKQMPCNHIYHSDCIVPWLVQHNSCPVCRQELPSASGPSSSQNRTTPTRNYRSSSSSSSSNSRENGNERRNPFSSFWPFRSSGSSSSSTQNRGGTRNSDTSDENHNYHQQQHQQSYMGYSGWPFDY.

Ser-2 carries the post-translational modification N-acetylserine. An RING-type; atypical zinc finger spans residues 190 to 231 (CPVCKDEFELGSEAKQMPCNHIYHSDCIVPWLVQHNSCPVCR). Residues 233-324 (ELPSASGPSS…QQSYMGYSGW (92 aa)) are disordered. Positions 238–250 (SGPSSSQNRTTPT) are enriched in polar residues. 2 stretches are compositionally biased toward low complexity: residues 251–266 (RNYR…NSRE) and 275–290 (FSSF…SSSS). Residues 291 to 300 (TQNRGGTRNS) are compositionally biased toward polar residues.

It carries out the reaction S-ubiquitinyl-[E2 ubiquitin-conjugating enzyme]-L-cysteine + [acceptor protein]-L-lysine = [E2 ubiquitin-conjugating enzyme]-L-cysteine + N(6)-ubiquitinyl-[acceptor protein]-L-lysine.. The protein operates within protein modification; protein ubiquitination. Its function is as follows. Probable E3 ubiquitin-protein ligase that may possess E3 ubiquitin ligase activity in vitro. The polypeptide is Probable E3 ubiquitin-protein ligase RHC1A (Arabidopsis thaliana (Mouse-ear cress)).